We begin with the raw amino-acid sequence, 377 residues long: Methionine import ATP-binding protein MetN 2 (377 aa).

In terms of domain architecture, ABC transporter spans 25–262 (IRIEHLSKTF…PKSAVARSFL (238 aa)). Residue 59 to 66 (GRSGAGKS) coordinates ATP.

The protein belongs to the ABC transporter superfamily. Methionine importer (TC 3.A.1.24) family. In terms of assembly, the complex is composed of two ATP-binding proteins (MetN), two transmembrane proteins (MetI) and a solute-binding protein (MetQ).

It is found in the cell inner membrane. It carries out the reaction L-methionine(out) + ATP + H2O = L-methionine(in) + ADP + phosphate + H(+). The catalysed reaction is D-methionine(out) + ATP + H2O = D-methionine(in) + ADP + phosphate + H(+). Functionally, part of the ABC transporter complex MetNIQ involved in methionine import. Responsible for energy coupling to the transport system. The polypeptide is Methionine import ATP-binding protein MetN 2 (Rhodopseudomonas palustris (strain ATCC BAA-98 / CGA009)).